The chain runs to 259 residues: S-methyl-5'-thioadenosine phosphorylase (259 aa).

Phosphate is bound by residues Ser-9 and 50-51 (RH). Met-175 contributes to the substrate binding site. Thr-176 contributes to the phosphate binding site. Residue 199-201 (DLD) participates in substrate binding.

Belongs to the PNP/MTAP phosphorylase family. MTAP subfamily. Homohexamer. Dimer of a homotrimer.

It carries out the reaction S-methyl-5'-thioadenosine + phosphate = 5-(methylsulfanyl)-alpha-D-ribose 1-phosphate + adenine. Its pathway is amino-acid biosynthesis; L-methionine biosynthesis via salvage pathway; S-methyl-5-thio-alpha-D-ribose 1-phosphate from S-methyl-5'-thioadenosine (phosphorylase route): step 1/1. In terms of biological role, catalyzes the reversible phosphorylation of S-methyl-5'-thioadenosine (MTA) to adenine and 5-methylthioribose-1-phosphate. Involved in the breakdown of MTA, a major by-product of polyamine biosynthesis. Responsible for the first step in the methionine salvage pathway after MTA has been generated from S-adenosylmethionine. Has broad substrate specificity with 6-aminopurine nucleosides as preferred substrates. The polypeptide is S-methyl-5'-thioadenosine phosphorylase (Mycolicibacterium smegmatis (strain ATCC 700084 / mc(2)155) (Mycobacterium smegmatis)).